A 343-amino-acid polypeptide reads, in one-letter code: UDP-3-O-acylglucosamine N-acyltransferase (343 aa).

Residue H239 is the Proton acceptor of the active site.

Belongs to the transferase hexapeptide repeat family. LpxD subfamily. In terms of assembly, homotrimer.

The catalysed reaction is a UDP-3-O-[(3R)-3-hydroxyacyl]-alpha-D-glucosamine + a (3R)-hydroxyacyl-[ACP] = a UDP-2-N,3-O-bis[(3R)-3-hydroxyacyl]-alpha-D-glucosamine + holo-[ACP] + H(+). Its pathway is bacterial outer membrane biogenesis; LPS lipid A biosynthesis. In terms of biological role, catalyzes the N-acylation of UDP-3-O-acylglucosamine using 3-hydroxyacyl-ACP as the acyl donor. Is involved in the biosynthesis of lipid A, a phosphorylated glycolipid that anchors the lipopolysaccharide to the outer membrane of the cell. The protein is UDP-3-O-acylglucosamine N-acyltransferase of Vibrio vulnificus (strain YJ016).